The primary structure comprises 230 residues: Metaxin-2 homolog (230 aa).

Belongs to the metaxin family. As to quaternary structure, associates with the mitochondrial contact site and cristae organizing system (MICOS) complex (also known as MINOS or MitOS complex).

The protein resides in the mitochondrion outer membrane. Functionally, involved in transport of proteins into the mitochondrion. This Caenorhabditis elegans protein is Metaxin-2 homolog (mtx-2).